The chain runs to 416 residues: Tyrosine--tRNA ligase (416 aa).

The 'HIGH' region motif lies at 55-64 (PTGSEIHLGH). The 'KMSKS' region motif lies at 249 to 253 (KMSKS). Residue Lys252 participates in ATP binding. Residues 352-416 (TKAFHLLSSI…GKKTFRRISN (65 aa)) enclose the S4 RNA-binding domain.

Belongs to the class-I aminoacyl-tRNA synthetase family. TyrS type 2 subfamily. As to quaternary structure, homodimer.

It localises to the cytoplasm. It carries out the reaction tRNA(Tyr) + L-tyrosine + ATP = L-tyrosyl-tRNA(Tyr) + AMP + diphosphate + H(+). Catalyzes the attachment of tyrosine to tRNA(Tyr) in a two-step reaction: tyrosine is first activated by ATP to form Tyr-AMP and then transferred to the acceptor end of tRNA(Tyr). This is Tyrosine--tRNA ligase from Prochlorococcus marinus (strain SARG / CCMP1375 / SS120).